Here is a 201-residue protein sequence, read N- to C-terminus: Probable phosphopantothenoylcysteine decarboxylase (201 aa).

Residues 20 to 22, 45 to 47, 98 to 101, and alanine 132 contribute to the FMN site; these read GSV, SKS, and SANT. Substrate-binding positions include asparagine 134 and 164-166; that span reads KLA. Cysteine 167 acts as the Proton donor in catalysis. Residue methionine 175 coordinates substrate.

This sequence belongs to the HFCD (homooligomeric flavin containing Cys decarboxylase) superfamily. Homotrimer. FMN is required as a cofactor. As to expression, expressed in roots, shoots, leaves, flowers, developing siliques and seeds.

The catalysed reaction is N-[(R)-4-phosphopantothenoyl]-L-cysteine + H(+) = (R)-4'-phosphopantetheine + CO2. The protein operates within cofactor biosynthesis; coenzyme A biosynthesis; CoA from (R)-pantothenate: step 3/5. Functionally, involved in plant growth and salt and osmotic tolerance. Catalyzes the decarboxylation of 4'-phosphopantothenoylcysteine to 4'-phosphopantetheine, a key step in coenzyme A biosynthesis. The enzyme is also able to decarboxylate pantothenoylcysteine to pantothenoylcysteamine. This Arabidopsis thaliana (Mouse-ear cress) protein is Probable phosphopantothenoylcysteine decarboxylase (HAL3B).